Here is a 739-residue protein sequence, read N- to C-terminus: NAD(P)H-quinone oxidoreductase subunit 5, chloroplastic (739 aa).

The next 16 helical transmembrane spans lie at 9-29, 39-59, 89-109, 125-145, 147-167, 185-205, 219-239, 258-278, 280-300, 327-347, 354-374, 396-416, 425-445, 542-562, 610-630, and 719-739; these read WVIP…LFFI, IWAF…VQLS, IDPL…LVLI, FVYI…SNLI, IYFF…FWFT, GDFG…SLEF, NGIN…GAVA, TPIS…FLLA, LLPL…VGTI, LGYM…FHLI, ALLF…VGYS, STFL…CFWS, WLYS…TAFY, LFPL…GISF, SLAI…YSFF, and ISSY…FFLF.

The protein belongs to the complex I subunit 5 family. As to quaternary structure, NDH is composed of at least 16 different subunits, 5 of which are encoded in the nucleus.

The protein localises to the plastid. It is found in the chloroplast thylakoid membrane. The enzyme catalyses a plastoquinone + NADH + (n+1) H(+)(in) = a plastoquinol + NAD(+) + n H(+)(out). The catalysed reaction is a plastoquinone + NADPH + (n+1) H(+)(in) = a plastoquinol + NADP(+) + n H(+)(out). Its function is as follows. NDH shuttles electrons from NAD(P)H:plastoquinone, via FMN and iron-sulfur (Fe-S) centers, to quinones in the photosynthetic chain and possibly in a chloroplast respiratory chain. The immediate electron acceptor for the enzyme in this species is believed to be plastoquinone. Couples the redox reaction to proton translocation, and thus conserves the redox energy in a proton gradient. The polypeptide is NAD(P)H-quinone oxidoreductase subunit 5, chloroplastic (ndhF) (Agrostis stolonifera (Creeping bentgrass)).